The primary structure comprises 725 residues: Lipoamidase (725 aa).

A disordered region spans residues 1-52 (MLAQESILETTVQTETESVTTETSQTVANLESETTSQTVMQEKESSSAIAES). The segment covering 9–27 (ETTVQTETESVTTETSQTV) has biased composition (low complexity). The span at 28-40 (ANLESETTSQTVM) shows a compositional bias: polar residues. Active-site charge relay system residues include Lys159 and Ser235. Ser259 serves as the catalytic Acyl-ester intermediate. Positions 551–686 (KINQPHVEEP…NKSMIGKQEQ (136 aa)) are disordered. The span at 556–637 (HVEEPDKDKE…TSEGPIEGKD (82 aa)) shows a compositional bias: basic and acidic residues. The segment covering 650–661 (SGSSLDNSLNSS) has biased composition (low complexity). Residues 662 to 679 (ANQGTKSTESTHAFSNKS) show a composition bias toward polar residues. Residues 700–720 (PSTFWIVLGGAFLVTSGTIYI) form a helical membrane-spanning segment.

Belongs to the amidase family. As to quaternary structure, homodimer in solution.

The protein localises to the cell membrane. It catalyses the reaction N(6)-[(R)-lipoyl]-L-lysyl-[lipoyl-carrier protein] + H2O = L-lysyl-[lipoyl-carrier protein] + (R)-lipoate. Lipoamidase activity is slightly inhibited by p-chloromercuribenzoate. Amidohydrolase that releases lipoic acid from the protein-bound form. Cleaves the amide bond that links lipoic acid to the lipoylated lysine epsilon-amino groups, leading to the formation of free lipoic acid plus the unmodified protein. Shows activity toward both high molecular weight protein substrates such as a lipoyl domain and intact 2-oxoacid dehydrogenases as well as small molecule substrates such as lipoyl-lysine. Also acts on small biotinylated substrates. Hydrolyzes the synthetic substrates methyl lipoate and lipoamide. The physiologically important substrates are probably lipoyl-lysine and small peptides containing lipoyl-lysine. Lpa seems likely to enable this bacterium to utilize amide-linked forms of lipoic acid that otherwise could not be assimilated. The polypeptide is Lipoamidase (Enterococcus faecalis (Streptococcus faecalis)).